A 372-amino-acid polypeptide reads, in one-letter code: Tomoregulin-1 (372 aa).

Residues 1–36 (MGAQAPLRLPAAPPLAVCGYTSVLLLFAFCLPGSRA) form the signal peptide. Residues 37 to 322 (SNQPAGGGGD…VPSRQKLTHV (286 aa)) are Extracellular-facing. N-linked (GlcNAc...) asparagine glycosylation occurs at asparagine 55. The Kazal-like 1 domain occupies 90-137 (ACQFQCHTNYIPVCGSNGDTYQNECFLRRAACKHQKDITVVARGPCYS). Intrachain disulfides connect cysteine 91–cysteine 121, cysteine 95–cysteine 114, and cysteine 103–cysteine 135. N-linked (GlcNAc...) asparagine glycosylation is present at asparagine 139. Residues 139 to 161 (NGSGSGEGEEEGSGAGAHRKHSK) are disordered. Residues 181-229 (VCNIDCSGYSFNPVCASDGSSYNNPCFVREASCIKQEQIDIRHLGHCTD) enclose the Kazal-like 2 domain. 6 disulfide bridges follow: cysteine 182-cysteine 213, cysteine 186-cysteine 206, cysteine 195-cysteine 227, cysteine 267-cysteine 280, cysteine 275-cysteine 291, and cysteine 293-cysteine 302. The region spanning 263–303 (SHMPCPENLNGYCIHGKCEFIYSTQKASCRCESGYTGQHCE) is the EGF-like domain. A helical transmembrane segment spans residues 323-343 (LIAAIIGAVQIAIIVAIVMCI). Residues 344 to 372 (TRKCPKNNRGRRQKQNLGHFTSDTSSRMV) are Cytoplasmic-facing. Positions 351–372 (NRGRRQKQNLGHFTSDTSSRMV) are disordered. A compositionally biased stretch (polar residues) spans 358–372 (QNLGHFTSDTSSRMV).

It belongs to the tomoregulin family. In terms of assembly, may interact with ST14. In terms of tissue distribution, maily expressed in neurons. Expressed in brain, neurointermediate lobe, pars distalis, pancreas, ovary and testis.

It is found in the cell membrane. In terms of biological role, neuron-specific restriction factor that prevents herpes simplex virus 1 (HHV-1) infection in the brain by blocking viral entry. Also able to restrict herpes simplex virus 2 (HHV-2) infection, although to a lesser extent. Acts by preventing the association between the viral glycoprotein D (gD) and its cell surface receptor NECTIN1, thereby inhibiting fusion of the virus and the cell membrane. Also able to prevent the association between the viral glycoprotein B (gB) and MYH9/NMMHC-IIA and MYH10/NMMHC-IIB receptors. In Mus musculus (Mouse), this protein is Tomoregulin-1.